Reading from the N-terminus, the 629-residue chain is tRNA uridine 5-carboxymethylaminomethyl modification enzyme MnmG (629 aa).

FAD is bound by residues 13 to 18 (GGGHAG), valine 125, and serine 180. NAD(+) is bound at residue 273–287 (GPRYCPSIEDKVMRF). FAD is bound at residue glutamine 370.

This sequence belongs to the MnmG family. As to quaternary structure, homodimer. Heterotetramer of two MnmE and two MnmG subunits. FAD is required as a cofactor.

The protein resides in the cytoplasm. Functionally, NAD-binding protein involved in the addition of a carboxymethylaminomethyl (cmnm) group at the wobble position (U34) of certain tRNAs, forming tRNA-cmnm(5)s(2)U34. The protein is tRNA uridine 5-carboxymethylaminomethyl modification enzyme MnmG of Escherichia coli O157:H7.